A 341-amino-acid chain; its full sequence is Type II restriction enzyme BgcI specificity subunit S.BcgI (341 aa).

This sequence belongs to the type-I restriction system S methylase family. As to quaternary structure, heterotrimer of two A and one B subunit. Both subunits are necessary for DNA-binding, which is sequence non-specific. The cofactor is Mg(2+).

The catalysed reaction is Endonucleolytic cleavage of DNA to give specific double-stranded fragments with terminal 5'-phosphates.. DNA restriction requires S-adenosyl-L-methionine and Mg(2+), and is inhibited by S-adenosyl-homocysteine. SAM may be a cofactor for DNA restriction. In terms of biological role, the specificity subunit. A B, G, H and S subtype restriction enzyme that recognizes the double-stranded sequence 5'-CGAN(6)TGC-3' and cleaves bilaterally and symmetrically 10 base pairs upstream and 12 base pairs downstream of the sequence to release a 34-base pair fragment. Methylation of the recognition sequence occurs on the adenine in either one or both strands; seems to methylate restricted DNA. This subunit degrades DNA in a non-specific manner. This is Type II restriction enzyme BgcI specificity subunit S.BcgI from Heyndrickxia coagulans (Weizmannia coagulans).